The sequence spans 118 residues: Late cornified envelope protein 1B (118 aa).

Positions 87–118 (CHRPQSSGCCSQPSGGSSCCGGGSGQHSGGCC) are disordered. Low complexity predominate over residues 90-103 (PQSSGCCSQPSGGS). A compositionally biased stretch (gly residues) spans 104-118 (SCCGGGSGQHSGGCC).

It belongs to the LCE family. Interacts with CYSRT1; the interaction is direct. In terms of tissue distribution, skin-specific. Expression was readily detected in adult trunk skin, adult arm skin, fetal skin, penal skin, vulva, esophagus and tongue. Not expressed in the cervix, rectum, lung, colon, or placenta.

Precursors of the cornified envelope of the stratum corneum. The sequence is that of Late cornified envelope protein 1B (LCE1B) from Homo sapiens (Human).